Here is a 254-residue protein sequence, read N- to C-terminus: Glucosamine-6-phosphate deaminase (254 aa).

Aspartate 63 acts as the Proton acceptor; for enolization step in catalysis. Residue asparagine 129 is the For ring-opening step of the active site. The Proton acceptor; for ring-opening step role is filled by histidine 131. The active-site For ring-opening step is the glutamate 136.

This sequence belongs to the glucosamine/galactosamine-6-phosphate isomerase family. NagB subfamily.

The enzyme catalyses alpha-D-glucosamine 6-phosphate + H2O = beta-D-fructose 6-phosphate + NH4(+). It functions in the pathway amino-sugar metabolism; N-acetylneuraminate degradation; D-fructose 6-phosphate from N-acetylneuraminate: step 5/5. Catalyzes the reversible isomerization-deamination of glucosamine 6-phosphate (GlcN6P) to form fructose 6-phosphate (Fru6P) and ammonium ion. The protein is Glucosamine-6-phosphate deaminase of Exiguobacterium sp. (strain ATCC BAA-1283 / AT1b).